The sequence spans 64 residues: Large ribosomal subunit protein bL35 (64 aa).

Belongs to the bacterial ribosomal protein bL35 family.

This chain is Large ribosomal subunit protein bL35, found in Vibrio metschnikovii.